We begin with the raw amino-acid sequence, 78 residues long: NEDD8-like protein RUB3 (78 aa).

Residue Gly76 forms a Glycyl lysine isopeptide (Gly-Lys) (interchain with K-? in acceptor proteins) linkage. Positions 77–78 are excised as a propeptide; that stretch reads CC.

Detected in stems and flower buds, but not in leaves, mature flowers and seedlings.

Functionally, may function as a stable post-translational protein modifier. This chain is NEDD8-like protein RUB3 (RUB3), found in Arabidopsis thaliana (Mouse-ear cress).